The primary structure comprises 28 residues: Dermaseptin-H2 (28 aa).

The protein belongs to the frog skin active peptide (FSAP) family. Dermaseptin subfamily. In terms of tissue distribution, expressed by the skin glands.

Its subcellular location is the secreted. Its function is as follows. Possesses a potent antimicrobial activity against Gram-positive and Gram-negative bacteria. Probably acts by disturbing membrane functions with its amphipathic structure. In Pithecopus azureus (Orange-legged monkey tree frog), this protein is Dermaseptin-H2.